A 137-amino-acid chain; its full sequence is Histone H2B.4 (137 aa).

Residues 1–37 (MAPKAEKKPAEKKPTEEKAEKKPRAEKRVPGKEGGEK) are compositionally biased toward basic and acidic residues. A disordered region spans residues 1–45 (MAPKAEKKPAEKKPTEEKAEKKPRAEKRVPGKEGGEKKGKKKAKK). N6-acetyllysine occurs at positions 7 and 27. A Glycyl lysine isopeptide (Lys-Gly) (interchain with G-Cter in ubiquitin) cross-link involves residue Lys-133.

It belongs to the histone H2B family. As to quaternary structure, the nucleosome is a histone octamer containing two molecules each of H2A, H2B, H3 and H4 assembled in one H3-H4 heterotetramer and two H2A-H2B heterodimers. The octamer wraps approximately 147 bp of DNA. Can be acetylated to form H2BK6ac and H2BK33ac. Post-translationally, monoubiquitinated to form H2BK143ub1; may give a specific tag for epigenetic transcriptional activation.

The protein resides in the nucleus. The protein localises to the chromosome. Its function is as follows. Core component of nucleosome. Nucleosomes wrap and compact DNA into chromatin, limiting DNA accessibility to the cellular machineries which require DNA as a template. Histones thereby play a central role in transcription regulation, DNA repair, DNA replication and chromosomal stability. DNA accessibility is regulated via a complex set of post-translational modifications of histones, also called histone code, and nucleosome remodeling. This chain is Histone H2B.4, found in Zea mays (Maize).